The primary structure comprises 409 residues: uncharacterized protein (409 aa).

Residues 3–162 form the N-acetyltransferase domain; that stretch reads TDVRVLRQDD…DDVRLRYAVP (160 aa). Acetyl-CoA is bound by residues 82 to 84, 90 to 95, and 118 to 119; these read VSV, RRGVLT, and SE. Catalysis depends on Tyr-123, which acts as the Proton donor. Catalysis depends on Phe-409, which acts as the Proton acceptor; via carboxylate.

Belongs to the acetyltransferase Eis family. In terms of assembly, homohexamer; trimer of dimers.

This is an uncharacterized protein from Streptomyces avermitilis (strain ATCC 31267 / DSM 46492 / JCM 5070 / NBRC 14893 / NCIMB 12804 / NRRL 8165 / MA-4680).